Reading from the N-terminus, the 654-residue chain is Biotin-dependent 3-methylcrotonyl-coenzyme A carboxylase alpha1 subunit (654 aa).

Positions 1-448 constitute a Biotin carboxylation domain; that stretch reads MFDTVLVANR…DTAVLDERSA (448 aa). One can recognise an ATP-grasp domain in the interval 120–319; it reads KNAVAAFDVP…LVEWQLRVGA (200 aa). 148–209 provides a ligand contact to ATP; sequence AAEVGYPVLI…ERFVLRPRHI (62 aa). Mg(2+) is bound by residues glutamate 275, glutamate 290, and asparagine 292. Positions 275, 290, and 292 each coordinate Mn(2+). The region spanning 578 to 653 is the Biotinyl-binding domain; that stretch reads HRAVGARPAE…KVEQVLARIK (76 aa). Position 620 is an N6-biotinyllysine (lysine 620).

As to quaternary structure, the biotin-dependent acyl-CoA carboxylase complex is composed of AccA1, which contains the biotin carboxylase (BC) and biotin carboxyl carrier protein (BCCP) domains, and AccD1, which contains the carboxyl transferase (CT) domain. The AccA1/AccD1 complex forms a dodecamer. Requires Mg(2+) as cofactor. The cofactor is Mn(2+). It depends on biotin as a cofactor.

The enzyme catalyses N(6)-biotinyl-L-lysyl-[protein] + hydrogencarbonate + ATP = N(6)-carboxybiotinyl-L-lysyl-[protein] + ADP + phosphate + H(+). It functions in the pathway amino-acid degradation; L-leucine degradation. Its function is as follows. Component of a biotin-dependent acyl-CoA carboxylase complex. This subunit catalyzes the ATP-dependent carboxylation of the biotin carried by the biotin carboxyl carrier (BCC) domain, resulting in the formation of carboxyl biotin. When associated with the beta1 subunit AccD1, is involved in branched amino-acid catabolism with methylcrotonyl coenzyme A as the substrate. In Mycobacterium bovis (strain ATCC BAA-935 / AF2122/97), this protein is Biotin-dependent 3-methylcrotonyl-coenzyme A carboxylase alpha1 subunit (accA1).